Reading from the N-terminus, the 187-residue chain is Nuclear transcription factor Y subunit C-8 (187 aa).

The interval 163 to 187 (WPGAWTSVSGEEEEARGKKGGDDGN) is disordered. The span at 177-187 (ARGKKGGDDGN) shows a compositional bias: basic and acidic residues.

The protein belongs to the NFYC/HAP5 subunit family. As to quaternary structure, heterotrimeric transcription factor composed of three components, NF-YA, NF-YB and NF-YC. NF-YB and NF-YC must interact and dimerize for NF-YA association and DNA binding. Expressed in flowers and siliques.

It is found in the nucleus. Its function is as follows. Stimulates the transcription of various genes by recognizing and binding to a CCAAT motif in promoters. In Arabidopsis thaliana (Mouse-ear cress), this protein is Nuclear transcription factor Y subunit C-8 (NFYC8).